The following is a 387-amino-acid chain: G2/mitotic-specific cyclin-B2 (387 aa).

The protein belongs to the cyclin family. Cyclin AB subfamily. In terms of assembly, interacts with the CDK1 protein kinase to form a serine/threonine kinase holoenzyme complex also known as maturation promoting factor (MPF). The cyclin subunit imparts substrate specificity to the complex.

Essential for the control of the cell cycle at the G2/M (mitosis) transition. In Oryzias latipes (Japanese rice fish), this protein is G2/mitotic-specific cyclin-B2 (ccnb2).